A 1221-amino-acid chain; its full sequence is DNA-directed RNA polymerase subunit beta' (1221 aa).

Zn(2+)-binding residues include cysteine 60, cysteine 62, cysteine 75, and cysteine 78. Aspartate 449, aspartate 451, and aspartate 453 together coordinate Mg(2+). Positions 821, 896, 903, and 906 each coordinate Zn(2+).

Belongs to the RNA polymerase beta' chain family. As to quaternary structure, the RNAP catalytic core consists of 2 alpha, 1 beta, 1 beta' and 1 omega subunit. When a sigma factor is associated with the core the holoenzyme is formed, which can initiate transcription. The cofactor is Mg(2+). It depends on Zn(2+) as a cofactor.

The catalysed reaction is RNA(n) + a ribonucleoside 5'-triphosphate = RNA(n+1) + diphosphate. Functionally, DNA-dependent RNA polymerase catalyzes the transcription of DNA into RNA using the four ribonucleoside triphosphates as substrates. This chain is DNA-directed RNA polymerase subunit beta', found in Lactobacillus delbrueckii subsp. bulgaricus (strain ATCC 11842 / DSM 20081 / BCRC 10696 / JCM 1002 / NBRC 13953 / NCIMB 11778 / NCTC 12712 / WDCM 00102 / Lb 14).